The following is a 784-amino-acid chain: Endonuclease MutS2 (784 aa).

Residue 335–342 (GPNTGGKT) participates in ATP binding. In terms of domain architecture, Smr spans 709-784 (LDLRGERYED…GTGVTIVELK (76 aa)).

This sequence belongs to the DNA mismatch repair MutS family. MutS2 subfamily. Homodimer. Binds to stalled ribosomes, contacting rRNA.

In terms of biological role, endonuclease that is involved in the suppression of homologous recombination and thus may have a key role in the control of bacterial genetic diversity. Its function is as follows. Acts as a ribosome collision sensor, splitting the ribosome into its 2 subunits. Detects stalled/collided 70S ribosomes which it binds and splits by an ATP-hydrolysis driven conformational change. Acts upstream of the ribosome quality control system (RQC), a ribosome-associated complex that mediates the extraction of incompletely synthesized nascent chains from stalled ribosomes and their subsequent degradation. Probably generates substrates for RQC. The chain is Endonuclease MutS2 from Geobacillus sp. (strain WCH70).